A 107-amino-acid polypeptide reads, in one-letter code: Universal stress protein B homolog (107 aa).

The next 2 membrane-spanning stretches (helical) occupy residues 6–26 and 86–106; these read TILF…LTAL and VREL…AAFI.

Belongs to the universal stress protein B family.

It localises to the cell inner membrane. The chain is Universal stress protein B homolog from Vibrio parahaemolyticus serotype O3:K6 (strain RIMD 2210633).